A 695-amino-acid chain; its full sequence is Centrosomal protein of 89 kDa (695 aa).

Disordered regions lie at residues 24 to 54, 66 to 147, and 167 to 272; these read LIPA…RPRS, TGRT…GDED, and AVPL…SEVL. The span at 34–49 shows a compositional bias: pro residues; the sequence is PAVPRTPPPRSPNPSP. Composition is skewed to acidic residues over residues 124 to 146 and 178 to 189; these read DEDD…EGDE and DSDVDEETEDSA. Positions 209–226 are enriched in polar residues; it reads GQTQPSSLPQPRSVSRRS. Positions 251–271 are enriched in basic and acidic residues; sequence TNKESPVRVNERDRSSEDSEV. Coiled coils occupy residues 276 to 368 and 406 to 632; these read LEVQ…RYQA and AYED…LEKE.

It localises to the cytoplasm. The protein resides in the cytosol. Its subcellular location is the cytoskeleton. The protein localises to the microtubule organizing center. It is found in the centrosome. It localises to the spindle pole. The protein resides in the centriole. Its subcellular location is the mitochondrion intermembrane space. In terms of biological role, required for ciliogenesis. Also plays a role in mitochondrial metabolism where it may modulate complex IV activity. The protein is Centrosomal protein of 89 kDa (cep89) of Danio rerio (Zebrafish).